The following is a 184-amino-acid chain: uncharacterized protein (184 aa).

Residues 72–135 (RKSQAILLIG…GIALGSAVKV (64 aa)) form the 4Fe-4S domain. 4 residues coordinate [4Fe-4S] cluster: Cys-92, Cys-95, Cys-100, and Cys-118.

Requires [4Fe-4S] cluster as cofactor.

This is an uncharacterized protein from Archaeoglobus fulgidus (strain ATCC 49558 / DSM 4304 / JCM 9628 / NBRC 100126 / VC-16).